The following is a 464-amino-acid chain: Ubiquinone biosynthesis monooxygenase COQ6, mitochondrial (464 aa).

The transit peptide at 1–24 (MRCLGGSSLSRLLRMLSQSQGRAL) directs the protein to the mitochondrion.

It belongs to the UbiH/COQ6 family. As to quaternary structure, component of a multi-subunit COQ enzyme complex, composed of at least coq3, coq4, coq5, coq6, coq7 and coq9. Interacts with coq8b and coq7. Requires FAD as cofactor.

The protein resides in the mitochondrion inner membrane. It is found in the golgi apparatus. It localises to the cell projection. It carries out the reaction a 4-hydroxy-3-(all-trans-polyprenyl)benzoate + 2 reduced [2Fe-2S]-[ferredoxin] + O2 + 2 H(+) = a 3,4-dihydroxy-5-(all-trans-polyprenyl)benzoate + 2 oxidized [2Fe-2S]-[ferredoxin] + H2O. It catalyses the reaction a 2-methoxy-6-(all-trans-polyprenyl)phenol + 2 reduced [2Fe-2S]-[ferredoxin] + O2 + 2 H(+) = a 2-methoxy-6-(all-trans-polyprenyl)benzene-1,4-diol + 2 oxidized [2Fe-2S]-[ferredoxin] + H2O. It participates in cofactor biosynthesis; ubiquinone biosynthesis. In terms of biological role, FAD-dependent monooxygenase required for two non-consecutive steps during ubiquinone biosynthesis. Required for the C5-ring hydroxylation during ubiquinone biosynthesis by catalyzing the hydroxylation of 4-hydroxy-3-(all-trans-polyprenyl)benzoic acid to 3,4-dihydroxy-5-(all-trans-polyprenyl)benzoic acid. Also acts downstream of coq4, for the C1-hydroxylation during ubiquinone biosynthesis by catalyzing the hydroxylation of 2-methoxy-6-(all-trans-polyprenyl)phenol to 2-methoxy-6-(all-trans-polyprenyl)benzene-1,4-diol. The electrons required for the hydroxylation reaction are funneled indirectly to coq6 from NADPH via a ferredoxin/ferredoxin reductase system. The chain is Ubiquinone biosynthesis monooxygenase COQ6, mitochondrial from Xenopus tropicalis (Western clawed frog).